Reading from the N-terminus, the 396-residue chain is Elongation factor Tu (396 aa).

Residues 10 to 205 enclose the tr-type G domain; the sequence is KSHANIGTIG…AVDEYIPTPE (196 aa). Positions 19-26 are G1; the sequence is GHVDHGKT. 19–26 contributes to the GTP binding site; that stretch reads GHVDHGKT. Thr26 provides a ligand contact to Mg(2+). Residues 61–65 form a G2 region; it reads GITIS. Residues 82-85 are G3; that stretch reads DCPG. Residues 82-86 and 137-140 each bind GTP; these read DCPGH and NKCD. Residues 137-140 form a G4 region; that stretch reads NKCD. Residues 175 to 177 are G5; the sequence is SAL.

This sequence belongs to the TRAFAC class translation factor GTPase superfamily. Classic translation factor GTPase family. EF-Tu/EF-1A subfamily. In terms of assembly, monomer.

The protein resides in the cytoplasm. The enzyme catalyses GTP + H2O = GDP + phosphate + H(+). Functionally, GTP hydrolase that promotes the GTP-dependent binding of aminoacyl-tRNA to the A-site of ribosomes during protein biosynthesis. The chain is Elongation factor Tu from Bacillus velezensis (strain DSM 23117 / BGSC 10A6 / LMG 26770 / FZB42) (Bacillus amyloliquefaciens subsp. plantarum).